A 331-amino-acid chain; its full sequence is Aspartate carbamoyltransferase catalytic subunit (331 aa).

Carbamoyl phosphate-binding residues include arginine 62 and threonine 63. L-aspartate is bound at residue lysine 90. Positions 112, 145, and 148 each coordinate carbamoyl phosphate. Residues arginine 185 and arginine 246 each contribute to the L-aspartate site. Positions 287 and 288 each coordinate carbamoyl phosphate.

The protein belongs to the aspartate/ornithine carbamoyltransferase superfamily. ATCase family. Heterododecamer (2C3:3R2) of six catalytic PyrB chains organized as two trimers (C3), and six regulatory PyrI chains organized as three dimers (R2).

The enzyme catalyses carbamoyl phosphate + L-aspartate = N-carbamoyl-L-aspartate + phosphate + H(+). It participates in pyrimidine metabolism; UMP biosynthesis via de novo pathway; (S)-dihydroorotate from bicarbonate: step 2/3. Catalyzes the condensation of carbamoyl phosphate and aspartate to form carbamoyl aspartate and inorganic phosphate, the committed step in the de novo pyrimidine nucleotide biosynthesis pathway. This is Aspartate carbamoyltransferase catalytic subunit from Synechocystis sp. (strain ATCC 27184 / PCC 6803 / Kazusa).